The primary structure comprises 161 residues: Nucleotide-binding protein azo2183 (161 aa).

This sequence belongs to the YajQ family.

Its function is as follows. Nucleotide-binding protein. The protein is Nucleotide-binding protein azo2183 of Azoarcus sp. (strain BH72).